Reading from the N-terminus, the 82-residue chain is Cytochrome c-551 (82 aa).

Heme c-binding residues include C12, C15, H16, and M61.

Binds 1 heme c group covalently per subunit.

This is a prokaryotic monoheme cytochrome, unreactive with mitochondrial cytochrome C oxidase or reductase. It functions in nitrite and nitrate respiration in Pseudomonas, but it is also found in other bacteria. This chain is Cytochrome c-551, found in Ectopseudomonas mendocina (Pseudomonas mendocina).